The chain runs to 507 residues: Rhamnogalacturonase A (507 aa).

A signal peptide spans 1-21; that stretch reads MYVSRLLLFLAPLLVKGQLSG. C38 and C64 are joined by a disulfide. The Proton donor role is filled by D215. A disulfide bond links C217 and C234. N-linked (GlcNAc...) asparagine glycosylation occurs at N235. H290 is an active-site residue. N317 carries an N-linked (GlcNAc...) asparagine glycan. Cystine bridges form between C340/C346 and C368/C377. Residues 462–491 are compositionally biased toward low complexity; sequence SPATSSPTATSTAISSVDPVSAATTTATSH. The disordered stretch occupies residues 462 to 507; that stretch reads SPATSSPTATSTAISSVDPVSAATTTATSHGHGKSHHKHQCRAHRH. Residues 492–507 show a composition bias toward basic residues; it reads GHGKSHHKHQCRAHRH.

Belongs to the glycosyl hydrolase 28 family.

It localises to the secreted. It carries out the reaction Endohydrolysis of alpha-D-GalA-(1-&gt;2)-alpha-L-Rha glycosidic bond in the rhamnogalacturonan I backbone with initial inversion of anomeric configuration releasing oligosaccharides with beta-D-GalA at the reducing end.. In terms of biological role, pectinolytic enzymes consist of four classes of enzymes: pectine lyase, polygalacturonase, pectin methylesterase and rhamnogalacturonase. Hydrolyzes alpha-D-galacturonopyranosyl-(1,2)-alpha-L-rhamnopyranosyl linkages in the backbone of the hairy regions of pectins. Active against linseed rhamnogalacturonan. This Emericella nidulans (strain FGSC A4 / ATCC 38163 / CBS 112.46 / NRRL 194 / M139) (Aspergillus nidulans) protein is Rhamnogalacturonase A (rhgA).